We begin with the raw amino-acid sequence, 134 residues long: Putative cytochrome c oxidase subunit 6b-like (134 aa).

Residues 1 to 61 (MSSAQMDPHD…DSGRETDAAV (61 aa)) form a disordered region. 2 stretches are compositionally biased toward basic and acidic residues: residues 7-19 (DPHD…DISK) and 44-61 (ATFR…DAAV). The region spanning 71–114 (TRHCFNRFMQYHKCIEKNGRDANDCNNLRDYVRSICPEELVSKI) is the CHCH domain. The Cx9C motif motif lies at 74-84 (CFNRFMQYHKC). 2 disulfides stabilise this stretch: C74–C106 and C84–C95. Positions 95–106 (CNNLRDYVRSIC) match the Cx10C motif motif.

It belongs to the cytochrome c oxidase subunit 6B (TC 3.D.4.8) family.

Its subcellular location is the mitochondrion. Its function is as follows. This protein is one of the nuclear-coded polypeptide chains of cytochrome c oxidase, the terminal oxidase in mitochondrial electron transport. This protein may be one of the heme-binding subunits of the oxidase. This is Putative cytochrome c oxidase subunit 6b-like from Arabidopsis thaliana (Mouse-ear cress).